Here is a 225-residue protein sequence, read N- to C-terminus: N-(5'-phosphoribosyl)anthranilate isomerase (225 aa).

Belongs to the TrpF family.

The enzyme catalyses N-(5-phospho-beta-D-ribosyl)anthranilate = 1-(2-carboxyphenylamino)-1-deoxy-D-ribulose 5-phosphate. It participates in amino-acid biosynthesis; L-tryptophan biosynthesis; L-tryptophan from chorismate: step 3/5. This Nitrobacter winogradskyi (strain ATCC 25391 / DSM 10237 / CIP 104748 / NCIMB 11846 / Nb-255) protein is N-(5'-phosphoribosyl)anthranilate isomerase.